The sequence spans 786 residues: MNDRVLRVLEFNKIKELVKGYAITKSAKEMVLDLKPYDSVYDVKEHLEETKEALDILMRKGNPPFEGLYDVKEAITRAEKGGVLSIEGLLRIGNMLSVTRKLSDFLARKEEEEEHRILEGMREGLIVLRGVESAISKAIVSEDEIADSASDKLYSIRRSLKEKNSSIRDKVNSIVRSNAQYLQDSLYTVRGDRYVIPVKAEYKSQVPGLVHDQSSTGATLFIEPTALVNLNNEIKELMLKERAEIERILAELSALVYKNIDVIKVNFNIIVELDFIFAKAKYGSDLGGTMPIVNEEGVIDLMDARHPLIPKDKVVSSDIYLGREFSTLLITGPNTGGKTVTLKTTGLIELMGLSGLLIPASENSSISFFEEIFADIGDEQSIEQSLSTFSSHMTNIVKIMEKANNKSFVLFDELGAGTDPTEGAALAISILENLRARGCRIMSTTHYSELKGYALKTENVENASVEFNVETLRPTYRLLIGVPGKSNAFEISRRLGLKDNVIEEAKKVISTESLQFEDLIQSLQEKSIKAENDAREAAILRNDAEKYKNRYKEKFERIESVRDNVYADARREAKQILDSAKEEADAILKNMRDLERMGISSDARRKLEAERGKLRDKISDAEARLQKKKEEQKGEELKKIEVGMEALLPSINQKVIVLSKPDNKGEVQVQAGIMKINVKAKDLRVAKETKEEKKIKKREARLNLRQVDPSIDLRGMDSEEACYTADKYLDDAYVAGRGEVTLVHGKGTGVLRKAINDMLKKHPHVKSHRLGEYGEGGTGVTVVILK.

Position 332–339 (332–339) interacts with ATP; it reads GPNTGGKT. The Smr domain occupies 711–786; sequence IDLRGMDSEE…GTGVTVVILK (76 aa).

The protein belongs to the DNA mismatch repair MutS family. MutS2 subfamily. In terms of assembly, homodimer. Binds to stalled ribosomes, contacting rRNA.

Its function is as follows. Endonuclease that is involved in the suppression of homologous recombination and thus may have a key role in the control of bacterial genetic diversity. Functionally, acts as a ribosome collision sensor, splitting the ribosome into its 2 subunits. Detects stalled/collided 70S ribosomes which it binds and splits by an ATP-hydrolysis driven conformational change. Acts upstream of the ribosome quality control system (RQC), a ribosome-associated complex that mediates the extraction of incompletely synthesized nascent chains from stalled ribosomes and their subsequent degradation. Probably generates substrates for RQC. In Clostridium perfringens (strain ATCC 13124 / DSM 756 / JCM 1290 / NCIMB 6125 / NCTC 8237 / Type A), this protein is Endonuclease MutS2.